We begin with the raw amino-acid sequence, 245 residues long: 5-oxoprolinase subunit A (245 aa).

This sequence belongs to the LamB/PxpA family. As to quaternary structure, forms a complex composed of PxpA, PxpB and PxpC.

It carries out the reaction 5-oxo-L-proline + ATP + 2 H2O = L-glutamate + ADP + phosphate + H(+). In terms of biological role, catalyzes the cleavage of 5-oxoproline to form L-glutamate coupled to the hydrolysis of ATP to ADP and inorganic phosphate. The sequence is that of 5-oxoprolinase subunit A from Neisseria meningitidis serogroup A / serotype 4A (strain DSM 15465 / Z2491).